Reading from the N-terminus, the 331-residue chain is UPF0194 membrane protein YbhG (331 aa).

Residues 1–19 (MKKPVVIGLAIAAIVAVIA) form the signal peptide. Residues 107-208 (EEIAQAAAAV…LDLQDTTLIA (102 aa)) are a coiled coil.

Belongs to the UPF0194 family.

It is found in the periplasm. This chain is UPF0194 membrane protein YbhG, found in Salmonella heidelberg (strain SL476).